A 491-amino-acid polypeptide reads, in one-letter code: bZIP transcription factor hapX (491 aa).

The disordered stretch occupies residues 19 to 73 (AKPAISPSPGPGTPGSITSKEWVIPPRPKPGRKPATDTPPTKRKAQNRAAQRAFR). Residues 55–95 (DTPPTKRKAQNRAAQRAFRERRAARVNELEEQIKKIEDEHE) enclose the bZIP domain. Residues 60–79 (KRKAQNRAAQRAFRERRAAR) form a basic motif region. The tract at residues 83–90 (LEEQIKKI) is leucine-zipper. The span at 149–161 (SSLSDREAVRSDK) shows a compositional bias: basic and acidic residues. Disordered regions lie at residues 149-196 (SSLS…REEV), 224-245 (EQSR…KPDP), and 397-416 (VSRG…SAAP). Residues 397 to 413 (VSRGRSGSNNNTSSGSS) show a composition bias toward low complexity.

This sequence belongs to the bZIP family. YAP subfamily.

The protein resides in the nucleus. Functionally, transcription factor required for repression of genes during iron starvation. Represses iron-dependent and mitochondrial-localized activities including respiration, TCA cycle, amino acid metabolism, iron-sulfur-cluster and heme biosynthesis. Iron starvation causes a massive remodeling of the amino acid pool and hapX is essential for the coordination of the production of siderophores and their precursor ornithine. This Aspergillus fumigatus (strain ATCC MYA-4609 / CBS 101355 / FGSC A1100 / Af293) (Neosartorya fumigata) protein is bZIP transcription factor hapX.